We begin with the raw amino-acid sequence, 366 residues long: A-type ATP synthase subunit C (366 aa).

The protein belongs to the V-ATPase V0D/AC39 subunit family. Has multiple subunits with at least A(3), B(3), C, D, E, F, H, I and proteolipid K(x).

It localises to the cell membrane. Functionally, component of the A-type ATP synthase that produces ATP from ADP in the presence of a proton gradient across the membrane. The protein is A-type ATP synthase subunit C of Thermococcus onnurineus (strain NA1).